A 251-amino-acid chain; its full sequence is MRTPIIAGNWKMNKNPQETQEFLDAIKGKLPDASVVESVIAAPAIDLSTLVAFSKDEQLKTAAENSYFEDEGAFTGETSPKALNEMGVNYVVIGHSERRQYFGETDEDINKKAKAIFNNNMTPIICCGETLEQREAGETNEWVAGQITNALKDLTAEQVAASVIAYEPIWAIGTGKTASSDQAQEVCHVIRETVAKLYDQTVADKVRIQYGGSVKPANIAELMGKEDIDGGLVGGASLDPESFLELVNYKG.

Residue N9–K11 coordinates substrate. H95 acts as the Electrophile in catalysis. E167 serves as the catalytic Proton acceptor. Substrate-binding positions include G173, S213, and G234–G235.

This sequence belongs to the triosephosphate isomerase family. As to quaternary structure, homodimer.

The protein resides in the cytoplasm. It carries out the reaction D-glyceraldehyde 3-phosphate = dihydroxyacetone phosphate. It functions in the pathway carbohydrate biosynthesis; gluconeogenesis. Its pathway is carbohydrate degradation; glycolysis; D-glyceraldehyde 3-phosphate from glycerone phosphate: step 1/1. Functionally, involved in the gluconeogenesis. Catalyzes stereospecifically the conversion of dihydroxyacetone phosphate (DHAP) to D-glyceraldehyde-3-phosphate (G3P). This chain is Triosephosphate isomerase, found in Pediococcus pentosaceus (strain ATCC 25745 / CCUG 21536 / LMG 10740 / 183-1w).